Reading from the N-terminus, the 106-residue chain is Replication restart protein PriB (106 aa).

Residues 4 to 103 (VNRLVLSGTV…LHAEQIELID (100 aa)) enclose the SSB domain.

Belongs to the PriB family. In terms of assembly, homodimer. Interacts with PriA and DnaT. Component of the replication restart primosome. Primosome assembly occurs via a 'hand-off' mechanism. PriA binds to replication forks, subsequently PriB then DnaT bind; DnaT then displaces ssDNA to generate the helicase loading substrate.

Its function is as follows. Involved in the restart of stalled replication forks, which reloads the replicative helicase on sites other than the origin of replication; the PriA-PriB pathway is the major replication restart pathway. During primosome assembly it facilitates complex formation between PriA and DnaT on DNA; stabilizes PriA on DNA. Stimulates the DNA unwinding activity of PriA helicase. The sequence is that of Replication restart protein PriB from Pectobacterium carotovorum subsp. carotovorum (strain PC1).